A 141-amino-acid chain; its full sequence is Protein archease (141 aa).

Positions 19 and 140 each coordinate Ca(2+).

The protein belongs to the archease family.

Functionally, activates the tRNA-splicing ligase complex by facilitating the enzymatic turnover of catalytic subunit RtcB. Acts by promoting the guanylylation of RtcB, a key intermediate step in tRNA ligation. Can also alter the NTP specificity of RtcB such that ATP, dGTP or ITP is used efficiently. The protein is Protein archease of Thermoplasma acidophilum (strain ATCC 25905 / DSM 1728 / JCM 9062 / NBRC 15155 / AMRC-C165).